A 23-amino-acid chain; its full sequence is Caerin-4.1 (23 aa).

Expressed by the skin parotoid and/or rostral glands.

It is found in the secreted. In terms of biological role, antibacterial peptide, that adopts an alpha helical conformation which can disrupt bacterial membranes. Each caerin displays a different antimicrobial specificity. The protein is Caerin-4.1 of Ranoidea caerulea (Green tree frog).